A 273-amino-acid polypeptide reads, in one-letter code: LOB domain-containing protein 20 (273 aa).

Positions 1 to 15 (MADQQRGHNTSDSRR) are enriched in basic and acidic residues. The interval 1-39 (MADQQRGHNTSDSRRKSLAGKRTSQQTPTSSLSSGGVSM) is disordered. The segment covering 23 to 39 (TSQQTPTSSLSSGGVSM) has biased composition (low complexity). The LOB domain maps to 50-152 (SPCGACKFLR…AELSVVQSQL (103 aa)). The interval 221 to 248 (LEHSLQPMPPHQQRRGDYQHEDEEESGA) is disordered.

The protein belongs to the LOB domain-containing protein family. Expressed in roots and flowers.

This chain is LOB domain-containing protein 20 (LBD20), found in Arabidopsis thaliana (Mouse-ear cress).